The following is a 711-amino-acid chain: Long-chain-fatty-acid--CoA ligase 4 (711 aa).

Residues Leu-8–Ile-28 traverse the membrane as a helical; Signal-anchor for type III membrane protein segment. Over Pro-29–Lys-711 the chain is Cytoplasmic. Ser-447 bears the Phosphoserine mark.

The protein belongs to the ATP-dependent AMP-binding enzyme family. Mg(2+) serves as cofactor.

The protein localises to the mitochondrion outer membrane. It localises to the peroxisome membrane. Its subcellular location is the microsome membrane. The protein resides in the endoplasmic reticulum membrane. It is found in the cell membrane. It catalyses the reaction a long-chain fatty acid + ATP + CoA = a long-chain fatty acyl-CoA + AMP + diphosphate. The catalysed reaction is (5Z,8Z,11Z,14Z)-eicosatetraenoate + ATP + CoA = (5Z,8Z,11Z,14Z)-eicosatetraenoyl-CoA + AMP + diphosphate. The enzyme catalyses hexadecanoate + ATP + CoA = hexadecanoyl-CoA + AMP + diphosphate. It carries out the reaction (E)-hexadec-2-enoate + ATP + CoA = (2E)-hexadecenoyl-CoA + AMP + diphosphate. It catalyses the reaction 15-hydroxy-(5Z,8Z,11Z,13E)-eicosatetraenoate + ATP + CoA = 15-hydroxy-(5Z,8Z,11Z,13E)-eicosatetraenoyl-CoA + AMP + diphosphate. The catalysed reaction is 12-hydroxy-(5Z,8Z,10E,14Z)-eicosatetraenoate + ATP + CoA = 12-hydroxy-(5Z,8Z,10E,14Z)-eicosatetraenoyl-CoA + AMP + diphosphate. The enzyme catalyses 5-hydroxy-(6E,8Z,11Z,14Z)-eicosatetraenoate + ATP + CoA = 5-hydroxy-(6E,8Z,11Z,14Z)-eicosatetraenoyl-CoA + AMP + diphosphate. It carries out the reaction 5,6-epoxy-(8Z,11Z,14Z)-eicosatrienoate + ATP + CoA = 5,6-epoxy-(8Z,11Z,14Z)-eicosatrienoyl-CoA + AMP + diphosphate. It catalyses the reaction 14,15-epoxy-(5Z,8Z,11Z)-eicosatrienoate + ATP + CoA = 14,15-epoxy-(5Z,8Z,11Z)-eicosatrienoyl-CoA + AMP + diphosphate. The catalysed reaction is 11,12-epoxy-(5Z,8Z,14Z)-eicosatrienoate + ATP + CoA = 11,12-epoxy-(5Z,8Z,14Z)-eicosatrienoyl-CoA + AMP + diphosphate. The enzyme catalyses 8,9-epoxy-(5Z,11Z,14Z)-eicosatrienoate + ATP + CoA = 8,9-epoxy-(5Z,11Z,14Z)-eicosatrienoyl-CoA + AMP + diphosphate. Its activity is regulated as follows. Both triacsin C and rosiglitazone inhibit arachidonoyl-CoA ligase activity. Functionally, catalyzes the conversion of long-chain fatty acids to their active form acyl-CoA for both synthesis of cellular lipids, and degradation via beta-oxidation. Preferentially activates arachidonate and eicosapentaenoate as substrates. Preferentially activates 8,9-EET &gt; 14,15-EET &gt; 5,6-EET &gt; 11,12-EET. Modulates glucose-stimulated insulin secretion by regulating the levels of unesterified EETs. Modulates prostaglandin E2 secretion. This is Long-chain-fatty-acid--CoA ligase 4 (ACSL4) from Homo sapiens (Human).